The sequence spans 499 residues: Lysine--tRNA ligase (499 aa).

Residues glutamate 408 and glutamate 415 each coordinate Mg(2+).

This sequence belongs to the class-II aminoacyl-tRNA synthetase family. In terms of assembly, homodimer. Mg(2+) is required as a cofactor.

The protein resides in the cytoplasm. It carries out the reaction tRNA(Lys) + L-lysine + ATP = L-lysyl-tRNA(Lys) + AMP + diphosphate. This chain is Lysine--tRNA ligase, found in Bacillus cereus (strain AH820).